Here is a 317-residue protein sequence, read N- to C-terminus: Carbonic anhydrase 5B, mitochondrial (317 aa).

Residues 1-33 (MTVMSHLRVSLQVSSCTLLWRRFRVPRLVPLRS) constitute a mitochondrion transit peptide. One can recognise an Alpha-carbonic anhydrase domain in the interval 37-296 (YTCTYRTRNR…LMNRTVRSSF (260 aa)). Positions 130, 132, and 155 each coordinate Zn(2+). 235-236 (TT) lines the substrate pocket.

Belongs to the alpha-carbonic anhydrase family. It depends on Zn(2+) as a cofactor.

Its subcellular location is the mitochondrion. It catalyses the reaction hydrogencarbonate + H(+) = CO2 + H2O. In terms of biological role, mitochondrial carbonic anhydrase that catalyzes the reversible conversion of carbon dioxide to bicarbonate/HCO3. The protein is Carbonic anhydrase 5B, mitochondrial (Ca5b) of Rattus norvegicus (Rat).